The primary structure comprises 1044 residues: Multiple epidermal growth factor-like domains protein 11 (1044 aa).

The first 19 residues, 1-19 (MVLSLTGLIAFSFLQATLA), serve as a signal peptide directing secretion. Residues 20–848 (LNPEDPNVCS…SPALGAERHS (829 aa)) lie on the Extracellular side of the membrane. Positions 24–101 (DPNVCSHWES…YYESGDFCIP (78 aa)) constitute an EMI domain. 14 disulfide bridges follow: cysteine 28/cysteine 89, cysteine 54/cysteine 63, cysteine 88/cysteine 99, cysteine 103/cysteine 118, cysteine 120/cysteine 129, cysteine 146/cysteine 154, cysteine 148/cysteine 161, cysteine 163/cysteine 172, cysteine 185/cysteine 197, cysteine 191/cysteine 204, cysteine 206/cysteine 215, cysteine 228/cysteine 240, cysteine 234/cysteine 247, and cysteine 249/cysteine 258. 9 consecutive EGF-like domains span residues 95-130 (SGDF…PDCS), 143-173 (SNRC…WRCE), 181-216 (HGKG…VYCE), 224-259 (HGAH…AVCA), 267-302 (FGQN…DRCQ), 310-345 (FGFQ…PRCQ), 399-434 (YGDG…EVCA), 442-477 (YGPN…LDCT), and 490-520 (NESC…DTCE). Asparagine 270 carries N-linked (GlcNAc...) asparagine glycosylation. 15 disulfides stabilise this stretch: cysteine 271–cysteine 283, cysteine 277–cysteine 290, cysteine 292–cysteine 301, cysteine 314–cysteine 326, cysteine 320–cysteine 333, cysteine 335–cysteine 344, cysteine 403–cysteine 415, cysteine 409–cysteine 422, cysteine 424–cysteine 433, cysteine 446–cysteine 458, cysteine 452–cysteine 465, cysteine 467–cysteine 476, cysteine 493–cysteine 501, cysteine 495–cysteine 508, and cysteine 510–cysteine 519. Asparagine 531 is a glycosylation site (N-linked (GlcNAc...) asparagine). 5 consecutive EGF-like domains span residues 571–606 (WGPN…PLCQ), 659–694 (FGQD…KDCS), 707–737 (FHAC…LFCT), 750–780 (GRVC…QHCE), and 788–823 (FGYG…IRCD). 15 cysteine pairs are disulfide-bonded: cysteine 575-cysteine 587, cysteine 581-cysteine 594, cysteine 596-cysteine 605, cysteine 663-cysteine 675, cysteine 669-cysteine 682, cysteine 684-cysteine 693, cysteine 710-cysteine 718, cysteine 712-cysteine 725, cysteine 727-cysteine 736, cysteine 753-cysteine 761, cysteine 755-cysteine 768, cysteine 770-cysteine 779, cysteine 792-cysteine 804, cysteine 798-cysteine 811, and cysteine 813-cysteine 822. The chain crosses the membrane as a helical span at residues 849-869 (VGAVTGIMLLLFLIVVLLGLF). At 870-1044 (AWHRRRQKEK…ANGPSQDKQS (175 aa)) the chain is on the cytoplasmic side. The disordered stretch occupies residues 1023-1044 (GHYDLLPVRQSPANGPSQDKQS). Residues 1033-1044 (SPANGPSQDKQS) show a composition bias toward polar residues.

This sequence belongs to the MEGF family. Homomer. Does not interact with MEGF10.

The protein resides in the cell membrane. The protein localises to the basolateral cell membrane. Functionally, may regulate the mosaic spacing of specific neuron subtypes in the retina through homotypic retinal neuron repulsion. Mosaics provide a mechanism to distribute each cell type evenly across the retina, ensuring that all parts of the visual field have access to a full set of processing elements. This Homo sapiens (Human) protein is Multiple epidermal growth factor-like domains protein 11 (MEGF11).